Consider the following 82-residue polypeptide: Small ribosomal subunit protein uS17 (82 aa).

This sequence belongs to the universal ribosomal protein uS17 family. In terms of assembly, part of the 30S ribosomal subunit.

In terms of biological role, one of the primary rRNA binding proteins, it binds specifically to the 5'-end of 16S ribosomal RNA. This is Small ribosomal subunit protein uS17 from Shewanella piezotolerans (strain WP3 / JCM 13877).